The sequence spans 762 residues: cGMP-dependent protein kinase 2 (762 aa).

The segment at 1-25 (MGNGSVKPKHSKHPDGQSGNLSNEA) is disordered. G2 is lipidated: N-myristoyl glycine. 2 positions are modified to phosphoserine: S110 and S117. The segment at 112-138 (LVSLHSRRGAKAGVSAEPTSRTYDLNK) is disordered. Residues 168–283 (FLKRLDPQQI…DEEYRNFLRS (116 aa)) are cGMP-binding, high affinity; cAMP-binding, moderate affinity. 3',5'-cyclic GMP is bound by residues 232–235 (GELA), 242–243 (RT), K347, 356–359 (GEKA), 366–367 (RS), D412, and R415. Positions 286 to 416 (LLKNLPEDKL…TLNRDDEKRH (131 aa)) are cGMP-binding, high affinity; cAMP-binding, low affinity. A Phosphoserine modification is found at S431. One can recognise a Protein kinase domain in the interval 453 to 711 (LEIIATLGVG…INDIKKHRWL (259 aa)). Residues 459–467 (LGVGGFGRV) and K482 each bind ATP. Catalysis depends on D576, which acts as the Proton acceptor. T609 bears the Phosphothreonine mark. The 51-residue stretch at 712–762 (NGFNWEGLKARSLPSPLRRELSGPIDHSYFDKYPPEKGVPPDEMSGWDKDF) folds into the AGC-kinase C-terminal domain. Positions 740-762 (YFDKYPPEKGVPPDEMSGWDKDF) are disordered.

Belongs to the protein kinase superfamily. AGC Ser/Thr protein kinase family. cGMP subfamily. Interacts with GRIA1/GLUR1. Myristoylation mediates membrane localization. As to expression, highly expressed in intestinal mucosa and is 20 times less abundant in brain and kidney. Expressed in jejunum, in the apical domain of the villus epithelium.

It is found in the apical cell membrane. It localises to the cell membrane. The enzyme catalyses L-seryl-[protein] + ATP = O-phospho-L-seryl-[protein] + ADP + H(+). The catalysed reaction is L-threonyl-[protein] + ATP = O-phospho-L-threonyl-[protein] + ADP + H(+). With respect to regulation, binding of cGMP results in enzyme activation. Functionally, crucial regulator of intestinal secretion and bone growth. Phosphorylates and activates CFTR on the plasma membrane. Plays a key role in intestinal secretion by regulating cGMP-dependent translocation of CFTR in jejunum. Acts downstream of NMDAR to activate the plasma membrane accumulation of GRIA1/GLUR1 in synapse and increase synaptic plasticity. Phosphorylates GRIA1/GLUR1 at Ser-863. Acts as regulator of gene expression and activator of the extracellular signal-regulated kinases MAPK3/ERK1 and MAPK1/ERK2 in mechanically stimulated osteoblasts. Under fluid shear stress, mediates ERK activation and subsequent induction of FOS, FOSL1/FRA1, FOSL2/FRA2 and FOSB that play a key role in the osteoblast anabolic response to mechanical stimulation. The protein is cGMP-dependent protein kinase 2 (Prkg2) of Rattus norvegicus (Rat).